A 285-amino-acid chain; its full sequence is Troponin T, cardiac muscle (285 aa).

The segment covering 1-58 has biased composition (acidic residues); it reads MSDVEEAVEEYEEQEEAAEEEHEEAVEEEAGGEAEAGEPCTAEDGEEEEGREAEDGPV. Disordered regions lie at residues 1-83 and 111-206; these read MSDV…GERV and RKKE…EKKK. N-acetylserine is present on Ser2. Ser2 is modified (phosphoserine; by CK2). The segment covering 66–77 has biased composition (pro residues); sequence RPFMPNLVPPKI. Basic and acidic residues-rich tracts occupy residues 111–171 and 190–206; these read RKKE…DEAR and QTER…EKKK. Thr191 bears the Phosphothreonine; by PKC/PRKCA mark. Ser195 bears the Phosphoserine; by PKC/PRKCA mark. Phosphothreonine; by PKC/PRKCA and RAF1 is present on Thr200. Thr281 is modified (phosphothreonine; by PKC/PRKCA).

It belongs to the troponin T family. Post-translationally, the N-terminus is blocked. In terms of processing, phosphorylation at Thr-200 by PRKCA induces significant reduction in myofilament calcium sensitivity and actomyosin ATPase activity.

Functionally, troponin T is the tropomyosin-binding subunit of troponin, the thin filament regulatory complex which confers calcium-sensitivity to striated muscle actomyosin ATPase activity. The chain is Troponin T, cardiac muscle (TNNT2) from Bos taurus (Bovine).